The sequence spans 542 residues: CTP synthase (542 aa).

The amidoligase domain stretch occupies residues 1 to 265 (MARYVFITGG…DSEVLCAFGI (265 aa)). Serine 13 is a binding site for CTP. UTP is bound at residue serine 13. 14 to 19 (SLGKGI) contributes to the ATP binding site. Tyrosine 54 contributes to the L-glutamine binding site. Position 71 (aspartate 71) interacts with ATP. Residues aspartate 71 and glutamate 139 each contribute to the Mg(2+) site. CTP is bound by residues 146–148 (DIE), 186–191 (KTKPTQ), and lysine 222. UTP contacts are provided by residues 186 to 191 (KTKPTQ) and lysine 222. In terms of domain architecture, Glutamine amidotransferase type-1 spans 291–541 (TIAVVGKYTG…IEAAVEQSRL (251 aa)). Alanine 353 contacts L-glutamine. The active-site Nucleophile; for glutamine hydrolysis is the cysteine 380. L-glutamine is bound by residues 381–384 (FGMQ), glutamate 404, and arginine 469. Catalysis depends on residues histidine 514 and glutamate 516.

It belongs to the CTP synthase family. As to quaternary structure, homotetramer.

It catalyses the reaction UTP + L-glutamine + ATP + H2O = CTP + L-glutamate + ADP + phosphate + 2 H(+). The enzyme catalyses L-glutamine + H2O = L-glutamate + NH4(+). The catalysed reaction is UTP + NH4(+) + ATP = CTP + ADP + phosphate + 2 H(+). The protein operates within pyrimidine metabolism; CTP biosynthesis via de novo pathway; CTP from UDP: step 2/2. With respect to regulation, allosterically activated by GTP, when glutamine is the substrate; GTP has no effect on the reaction when ammonia is the substrate. The allosteric effector GTP functions by stabilizing the protein conformation that binds the tetrahedral intermediate(s) formed during glutamine hydrolysis. Inhibited by the product CTP, via allosteric rather than competitive inhibition. Catalyzes the ATP-dependent amination of UTP to CTP with either L-glutamine or ammonia as the source of nitrogen. Regulates intracellular CTP levels through interactions with the four ribonucleotide triphosphates. The protein is CTP synthase of Bartonella tribocorum (strain CIP 105476 / IBS 506).